We begin with the raw amino-acid sequence, 100 residues long: NAD(P)H-quinone oxidoreductase subunit 4L, chloroplastic (100 aa).

A run of 3 helical transmembrane segments spans residues 1–21, 27–47, and 61–81; these read MIEN…YGLI, IKVL…LVAF, and FAVF…AIVF.

It belongs to the complex I subunit 4L family. NDH is composed of at least 16 different subunits, 5 of which are encoded in the nucleus.

The protein resides in the plastid. The protein localises to the chloroplast thylakoid membrane. It catalyses the reaction a plastoquinone + NADH + (n+1) H(+)(in) = a plastoquinol + NAD(+) + n H(+)(out). The enzyme catalyses a plastoquinone + NADPH + (n+1) H(+)(in) = a plastoquinol + NADP(+) + n H(+)(out). NDH shuttles electrons from NAD(P)H:plastoquinone, via FMN and iron-sulfur (Fe-S) centers, to quinones in the photosynthetic chain and possibly in a chloroplast respiratory chain. The immediate electron acceptor for the enzyme in this species is believed to be plastoquinone. Couples the redox reaction to proton translocation, and thus conserves the redox energy in a proton gradient. This chain is NAD(P)H-quinone oxidoreductase subunit 4L, chloroplastic, found in Chaetosphaeridium globosum (Charophycean green alga).